A 419-amino-acid polypeptide reads, in one-letter code: Glutamate dehydrogenase (419 aa).

Lys105 is an active-site residue. 219–225 is a binding site for NAD(+); it reads GYGNAGY.

This sequence belongs to the Glu/Leu/Phe/Val dehydrogenases family. In terms of assembly, homohexamer.

It catalyses the reaction L-glutamate + NAD(+) + H2O = 2-oxoglutarate + NH4(+) + NADH + H(+). The enzyme catalyses L-glutamate + NADP(+) + H2O = 2-oxoglutarate + NH4(+) + NADPH + H(+). The protein is Glutamate dehydrogenase (gdhA) of Thermococcus profundus.